The following is a 237-amino-acid chain: B3 domain-containing protein Os03g0184500 (237 aa).

The segment at residues 137–228 (FVKPMLHSHV…TFKVHIIRAT (92 aa)) is a DNA-binding region (TF-B3).

The protein resides in the nucleus. The protein is B3 domain-containing protein Os03g0184500 of Oryza sativa subsp. japonica (Rice).